A 135-amino-acid chain; its full sequence is Cofilin-4 (135 aa).

Residues 3-135 (SCASINDEVI…SQSLVEERCK (133 aa)) form the ADF-H domain.

This sequence belongs to the actin-binding proteins ADF family.

It is found in the cytoplasm. The protein localises to the cytoskeleton. In terms of biological role, controls actin polymerization and depolymerization. The polypeptide is Cofilin-4 (cofE) (Dictyostelium discoideum (Social amoeba)).